Here is a 375-residue protein sequence, read N- to C-terminus: MGKRDYYEILGIDKSASQDEIKKNYRKLARKYHPDVNKEADAAEKFKEVKEAYEVLSDDQKRAQYDQFGHSGPQSQGFGGFGGGAQDFGGFGDIFDMFFGGGGRSRDPNAPQQGNDLQYTMILDFEEAVFGKETDIEIPKEESCDTCNGSGAKPGTKPETCSHCHGSGQLNQEQNTPFGRVVNRRVCNYCQGTGKIIPDKCNTCGGSGTVQKNKKIHISIPAGIDEGQQIRVAGKGESGKNGGPAGDLFVVIKVRPHDFFVREGDHIFCELPLTYAQAALGDELEVPTVHGKVKVKVPAGTQTGKTFRIKGKGAPNVRGRGHGDQHIKIKVMTPTNLSEKQKDLLREFNELGGNESTDEQDDNIFQRFRRAFKGE.

The J domain maps to 5–69 (DYYEILGIDK…QKRAQYDQFG (65 aa)). The CR-type zinc finger occupies 131–213 (GKETDIEIPK…CGGSGTVQKN (83 aa)). C144, C147, C161, C164, C187, C190, C201, and C204 together coordinate Zn(2+). CXXCXGXG motif repeat units follow at residues 144–151 (CDTCNGSG), 161–168 (CSHCHGSG), 187–194 (CNYCQGTG), and 201–208 (CNTCGGSG).

It belongs to the DnaJ family. Homodimer. Zn(2+) serves as cofactor.

It is found in the cytoplasm. In terms of biological role, participates actively in the response to hyperosmotic and heat shock by preventing the aggregation of stress-denatured proteins and by disaggregating proteins, also in an autonomous, DnaK-independent fashion. Unfolded proteins bind initially to DnaJ; upon interaction with the DnaJ-bound protein, DnaK hydrolyzes its bound ATP, resulting in the formation of a stable complex. GrpE releases ADP from DnaK; ATP binding to DnaK triggers the release of the substrate protein, thus completing the reaction cycle. Several rounds of ATP-dependent interactions between DnaJ, DnaK and GrpE are required for fully efficient folding. Also involved, together with DnaK and GrpE, in the DNA replication of plasmids through activation of initiation proteins. The protein is Chaperone protein DnaJ of Oceanobacillus iheyensis (strain DSM 14371 / CIP 107618 / JCM 11309 / KCTC 3954 / HTE831).